Consider the following 20-residue polypeptide: Endo-1,6-beta-glucanase (20 aa).

Belongs to the glycosyl hydrolase 5 (cellulase A) family.

The protein resides in the secreted. Its subcellular location is the extracellular space. The catalysed reaction is Random hydrolysis of (1-&gt;6)-linkages in (1-&gt;6)-beta-D-glucans.. Functionally, endo-1,6-beta-glucanase that has highest activity against the beta-1,6-glucan pustulan. Also active against the beta-1,6-glucan lutean. Lower activity against laminarin (beta-1,3-glucan with beta-1,6-branches). Little or no activity against gentiobiose, yeast glucan, lichenin, scleroglucan, curdlan, barley glucan, CM cellulose, HE cellulose, pachyman and pullulan. The chain is Endo-1,6-beta-glucanase from Acremonium sp.